Reading from the N-terminus, the 197-residue chain is Elongation factor Ts (197 aa).

The segment at 81–84 (TDFV) is involved in Mg(2+) ion dislocation from EF-Tu.

The protein belongs to the EF-Ts family.

It is found in the cytoplasm. Associates with the EF-Tu.GDP complex and induces the exchange of GDP to GTP. It remains bound to the aminoacyl-tRNA.EF-Tu.GTP complex up to the GTP hydrolysis stage on the ribosome. The polypeptide is Elongation factor Ts (Persephonella marina (strain DSM 14350 / EX-H1)).